The sequence spans 266 residues: Mediator of RNA polymerase II transcription subunit 18 (266 aa).

This sequence belongs to the Mediator complex subunit 18 family. As to quaternary structure, component of the Mediator complex.

Its subcellular location is the nucleus. In terms of biological role, component of the Mediator complex, a coactivator involved in the regulated transcription of nearly all RNA polymerase II-dependent genes. Mediator functions as a bridge to convey information from gene-specific regulatory proteins to the basal RNA polymerase II transcription machinery. Mediator is recruited to promoters by direct interactions with regulatory proteins and serves as a scaffold for the assembly of a functional preinitiation complex with RNA polymerase II and the general transcription factors. The chain is Mediator of RNA polymerase II transcription subunit 18 (SRB5) from Candida glabrata (strain ATCC 2001 / BCRC 20586 / JCM 3761 / NBRC 0622 / NRRL Y-65 / CBS 138) (Yeast).